We begin with the raw amino-acid sequence, 101 residues long: Small ribosomal subunit protein uS14 (101 aa).

This sequence belongs to the universal ribosomal protein uS14 family. Part of the 30S ribosomal subunit. Contacts proteins S3 and S10.

Its function is as follows. Binds 16S rRNA, required for the assembly of 30S particles and may also be responsible for determining the conformation of the 16S rRNA at the A site. In Chlamydia trachomatis serovar L2 (strain ATCC VR-902B / DSM 19102 / 434/Bu), this protein is Small ribosomal subunit protein uS14.